Reading from the N-terminus, the 194-residue chain is Putative manganese efflux pump MntP (194 aa).

6 consecutive transmembrane segments (helical) span residues isoleucine 2–valine 22, leucine 43–phenylalanine 63, valine 67–valine 87, proline 111–phenylalanine 131, alanine 137–isoleucine 157, and glycine 174–phenylalanine 194.

Belongs to the MntP (TC 9.B.29) family.

Its subcellular location is the cell membrane. Its function is as follows. Probably functions as a manganese efflux pump. This is Putative manganese efflux pump MntP from Bifidobacterium longum (strain DJO10A).